Reading from the N-terminus, the 347-residue chain is Phosphoribosylformylglycinamidine cyclo-ligase (347 aa).

Belongs to the AIR synthase family.

The protein localises to the cytoplasm. It catalyses the reaction 2-formamido-N(1)-(5-O-phospho-beta-D-ribosyl)acetamidine + ATP = 5-amino-1-(5-phospho-beta-D-ribosyl)imidazole + ADP + phosphate + H(+). Its pathway is purine metabolism; IMP biosynthesis via de novo pathway; 5-amino-1-(5-phospho-D-ribosyl)imidazole from N(2)-formyl-N(1)-(5-phospho-D-ribosyl)glycinamide: step 2/2. The protein is Phosphoribosylformylglycinamidine cyclo-ligase of Yersinia pseudotuberculosis serotype O:1b (strain IP 31758).